The sequence spans 159 residues: SsrA-binding protein (159 aa).

This sequence belongs to the SmpB family.

Its subcellular location is the cytoplasm. In terms of biological role, required for rescue of stalled ribosomes mediated by trans-translation. Binds to transfer-messenger RNA (tmRNA), required for stable association of tmRNA with ribosomes. tmRNA and SmpB together mimic tRNA shape, replacing the anticodon stem-loop with SmpB. tmRNA is encoded by the ssrA gene; the 2 termini fold to resemble tRNA(Ala) and it encodes a 'tag peptide', a short internal open reading frame. During trans-translation Ala-aminoacylated tmRNA acts like a tRNA, entering the A-site of stalled ribosomes, displacing the stalled mRNA. The ribosome then switches to translate the ORF on the tmRNA; the nascent peptide is terminated with the 'tag peptide' encoded by the tmRNA and targeted for degradation. The ribosome is freed to recommence translation, which seems to be the essential function of trans-translation. The protein is SsrA-binding protein of Coxiella burnetii (strain RSA 331 / Henzerling II).